The primary structure comprises 167 residues: 3-dehydroquinate dehydratase (167 aa).

Tyr22 serves as the catalytic Proton acceptor. Asn76, His82, and Asp89 together coordinate substrate. The active-site Proton donor is His102. Residues 103–104 (LT) and Arg113 each bind substrate.

Belongs to the type-II 3-dehydroquinase family. As to quaternary structure, homododecamer.

It carries out the reaction 3-dehydroquinate = 3-dehydroshikimate + H2O. Its pathway is metabolic intermediate biosynthesis; chorismate biosynthesis; chorismate from D-erythrose 4-phosphate and phosphoenolpyruvate: step 3/7. In terms of biological role, catalyzes a trans-dehydration via an enolate intermediate. The chain is 3-dehydroquinate dehydratase from Helicobacter pylori (strain Shi470).